The primary structure comprises 183 residues: Ribosome rescue factor SmrB (183 aa).

The 76-residue stretch at Leu98 to Glu173 folds into the Smr domain.

This sequence belongs to the SmrB family. As to quaternary structure, associates with collided ribosomes, but not with correctly translating polysomes.

Its function is as follows. Acts as a ribosome collision sensor. Detects stalled/collided disomes (pairs of ribosomes where the leading ribosome is stalled and a second ribosome has collided with it) and endonucleolytically cleaves mRNA at the 5' boundary of the stalled ribosome. Stalled/collided disomes form a new interface (primarily via the 30S subunits) that binds SmrB. Cleaved mRNA becomes available for tmRNA ligation, leading to ribosomal subunit dissociation and rescue of stalled ribosomes. This is Ribosome rescue factor SmrB from Escherichia coli O17:K52:H18 (strain UMN026 / ExPEC).